Here is a 266-residue protein sequence, read N- to C-terminus: Energy-coupling factor transporter transmembrane protein EcfT (266 aa).

Transmembrane regions (helical) follow at residues 26–46 (VIAT…RSVT), 47–67 (LAGL…HYIL), 69–89 (GIKP…LSTP), 116–136 (LIWL…IALT), 151–171 (LPVH…PTLI), 192–212 (SLVA…LSAF), and 246–266 (YAVT…KKAL).

Belongs to the energy-coupling factor EcfT family. As to quaternary structure, forms a stable energy-coupling factor (ECF) transporter complex composed of 2 membrane-embedded substrate-binding proteins (S component), 2 ATP-binding proteins (A component) and 2 transmembrane proteins (T component). May be able to interact with more than 1 S component at a time.

The protein localises to the cell membrane. Its function is as follows. Transmembrane (T) component of an energy-coupling factor (ECF) ABC-transporter complex. Unlike classic ABC transporters this ECF transporter provides the energy necessary to transport a number of different substrates. The sequence is that of Energy-coupling factor transporter transmembrane protein EcfT from Heliobacterium modesticaldum (strain ATCC 51547 / Ice1).